The primary structure comprises 660 residues: Probable serine/threonine-protein kinase CE0033 (660 aa).

A Protein kinase domain is found at 9-278; that stretch reads YELGASIGSG…AEMAADLELL (270 aa). Residues 15-23 and K38 each bind ATP; that span reads IGSGGMSEV. The active-site Proton acceptor is the D136. Residues 288–319 are disordered; that stretch reads RAHVEKPDEPETVVVPQRLSTPPPPPTPAMPA. PASTA domains follow at residues 377–443, 444–512, and 513–577; these read SAST…TISS, GREV…TVST, and GPSL…EISN.

This sequence belongs to the protein kinase superfamily. Ser/Thr protein kinase family.

It carries out the reaction L-seryl-[protein] + ATP = O-phospho-L-seryl-[protein] + ADP + H(+). It catalyses the reaction L-threonyl-[protein] + ATP = O-phospho-L-threonyl-[protein] + ADP + H(+). In Corynebacterium efficiens (strain DSM 44549 / YS-314 / AJ 12310 / JCM 11189 / NBRC 100395), this protein is Probable serine/threonine-protein kinase CE0033.